The following is a 363-amino-acid chain: Flagellar P-ring protein (363 aa).

The N-terminal stretch at 1 to 20 (MKIKVLLAVALLAMTVPVKA) is a signal peptide.

The protein belongs to the FlgI family. In terms of assembly, the basal body constitutes a major portion of the flagellar organelle and consists of four rings (L,P,S, and M) mounted on a central rod.

It localises to the periplasm. The protein localises to the bacterial flagellum basal body. Assembles around the rod to form the L-ring and probably protects the motor/basal body from shearing forces during rotation. The protein is Flagellar P-ring protein of Shewanella amazonensis (strain ATCC BAA-1098 / SB2B).